The chain runs to 173 residues: NEDD4-binding protein 2-like 1 (173 aa).

Residues 1-35 are disordered; that stretch reads MEESFLESFGRLSLRQQQPPPPRPPAPPPLRGTPP. The segment covering 18–32 has biased composition (pro residues); it reads QPPPPRPPAPPPLRG.

As to quaternary structure, interacts with dynactin subunit proteins, including DCTN4, DCTN5 and DCTN5.

Its function is as follows. Might play a role in adipocyte differentiation and triglyceride accumulation. The protein is NEDD4-binding protein 2-like 1 (N4BP2L1) of Bos taurus (Bovine).